The primary structure comprises 233 residues: Endo-1,4-beta-xylanase 1 (233 aa).

The first 20 residues, 1–20 (MVSFTSIVTAVVALAGSALA), serve as a signal peptide directing secretion. The N-linked (GlcNAc...) asparagine glycan is linked to Asn-27. The GH11 domain occupies 40–230 (QSTPSSTGRH…SAGNSNINVQ (191 aa)). The active-site Nucleophile is Glu-126. Glu-217 (proton donor) is an active-site residue.

This sequence belongs to the glycosyl hydrolase 11 (cellulase G) family.

It localises to the secreted. It catalyses the reaction Endohydrolysis of (1-&gt;4)-beta-D-xylosidic linkages in xylans.. The protein operates within glycan degradation; xylan degradation. Its function is as follows. Endo-1,4-beta-xylanase involved in the hydrolysis of xylan, a major structural heterogeneous polysaccharide found in plant biomass representing the second most abundant polysaccharide in the biosphere, after cellulose. Accounts for approximately 70 percent of the endoxylanase activity in the culture filtrate. This is Endo-1,4-beta-xylanase 1 (XYL1) from Pyricularia grisea (Crabgrass-specific blast fungus).